Consider the following 252-residue polypeptide: Imidazole glycerol phosphate synthase subunit HisF (252 aa).

Residues Asp-11 and Asp-130 contribute to the active site.

The protein belongs to the HisA/HisF family. As to quaternary structure, heterodimer of HisH and HisF.

Its subcellular location is the cytoplasm. It carries out the reaction 5-[(5-phospho-1-deoxy-D-ribulos-1-ylimino)methylamino]-1-(5-phospho-beta-D-ribosyl)imidazole-4-carboxamide + L-glutamine = D-erythro-1-(imidazol-4-yl)glycerol 3-phosphate + 5-amino-1-(5-phospho-beta-D-ribosyl)imidazole-4-carboxamide + L-glutamate + H(+). The protein operates within amino-acid biosynthesis; L-histidine biosynthesis; L-histidine from 5-phospho-alpha-D-ribose 1-diphosphate: step 5/9. IGPS catalyzes the conversion of PRFAR and glutamine to IGP, AICAR and glutamate. The HisF subunit catalyzes the cyclization activity that produces IGP and AICAR from PRFAR using the ammonia provided by the HisH subunit. This is Imidazole glycerol phosphate synthase subunit HisF from Bacillus thuringiensis (strain Al Hakam).